The chain runs to 376 residues: MSQVELLNQTLTLQRFPPMPEETPLQAWEAADEYLLQQVEQPSGPVLIFNDSFGALACALAEVRPVSVNDSFIAHQATRHNLRLNDIDDSLVTMQDSLSPLPDAPELVLMKIPKQLALLEQQLRALRKVVTPQTRIIAGAKARDIHTSTLTLFEKILGPTTTTLAWKKARLIHCAFSAPALADAPETLSWKLDGTPWTIHNHASVFSRTSLDIGARFFMQHLPEAVEGEMVDLGCGNGVIGLTLLAQNPQAKVRFVDESYMAVASSRLNVETNLPEAMERCEFQVNNALTGVEPESFHAVLCNPPFHQQHAITDHIAWQMFQDARRCLKWGGELRIVGNRHLDYFRKLKKIFGNCTTVATNNKFVVLKAVKLRKSR.

This sequence belongs to the methyltransferase superfamily. RlmG family.

Its subcellular location is the cytoplasm. The enzyme catalyses guanosine(1835) in 23S rRNA + S-adenosyl-L-methionine = N(2)-methylguanosine(1835) in 23S rRNA + S-adenosyl-L-homocysteine + H(+). Functionally, specifically methylates the guanine in position 1835 (m2G1835) of 23S rRNA. The chain is Ribosomal RNA large subunit methyltransferase G from Cronobacter sakazakii (strain ATCC BAA-894) (Enterobacter sakazakii).